The chain runs to 216 residues: Ribose-5-phosphate isomerase A (216 aa).

Substrate is bound by residues threonine 26–threonine 29, aspartate 79–aspartate 82, and lysine 92–glycine 95. Glutamate 101 serves as the catalytic Proton acceptor. Position 119 (lysine 119) interacts with substrate.

The protein belongs to the ribose 5-phosphate isomerase family. Homodimer.

The enzyme catalyses aldehydo-D-ribose 5-phosphate = D-ribulose 5-phosphate. It functions in the pathway carbohydrate degradation; pentose phosphate pathway; D-ribose 5-phosphate from D-ribulose 5-phosphate (non-oxidative stage): step 1/1. Catalyzes the reversible conversion of ribose-5-phosphate to ribulose 5-phosphate. The chain is Ribose-5-phosphate isomerase A from Legionella pneumophila (strain Paris).